A 208-amino-acid chain; its full sequence is Large ribosomal subunit protein bL9 (208 aa).

Residues 168–208 (GKVEKGSCTEGESLELGSVDNDINSGNVDSNESEKQDSVSE) form a disordered region. Positions 188-197 (NDINSGNVDS) are enriched in polar residues. The span at 199–208 (ESEKQDSVSE) shows a compositional bias: basic and acidic residues.

This sequence belongs to the bacterial ribosomal protein bL9 family.

Its function is as follows. Binds to the 23S rRNA. This is Large ribosomal subunit protein bL9 from Ehrlichia chaffeensis (strain ATCC CRL-10679 / Arkansas).